Reading from the N-terminus, the 252-residue chain is Fructose-1,6-bisphosphatase/inositol-1-monophosphatase (252 aa).

Residues D38, T40, E67, D82, L84, and D85 each coordinate Mg(2+). Substrate-binding positions include 85–87 (DGT), R167, A172, and R191. D200 is a Mg(2+) binding site.

Belongs to the inositol monophosphatase superfamily. FBPase class 4 family. In terms of assembly, homodimer. Mg(2+) is required as a cofactor. It depends on Mn(2+) as a cofactor.

It catalyses the reaction beta-D-fructose 1,6-bisphosphate + H2O = beta-D-fructose 6-phosphate + phosphate. The enzyme catalyses a myo-inositol phosphate + H2O = myo-inositol + phosphate. With respect to regulation, both FBPase and IMPase activities are inhibited by Ca(2+). In contrast to mammalian I-1-P phosphatases, is only very weakly inhibited by Li(+) (with an IC(50) of about 290 mM). Its function is as follows. Phosphatase with broad specificity; it can dephosphorylate fructose 1,6-bisphosphate, both D and L isomers of inositol-1-phosphate (I-1-P), 2'-AMP, pNPP, inositol-2-phosphate, beta-glycerol phosphate, and alpha-D-glucose-1-phosphate. Cannot hydrolyze glucose-6-phosphate and fructose-6-phosphate. May be involved in the biosynthesis of a unique osmolyte, di-myo-inositol 1,1-phosphate. The sequence is that of Fructose-1,6-bisphosphatase/inositol-1-monophosphatase (suhB) from Archaeoglobus fulgidus (strain ATCC 49558 / DSM 4304 / JCM 9628 / NBRC 100126 / VC-16).